Reading from the N-terminus, the 361-residue chain is 5-exo-hydroxycamphor dehydrogenase (361 aa).

Zn(2+)-binding residues include cysteine 40, histidine 62, cysteine 98, cysteine 101, cysteine 104, and cysteine 170.

This sequence belongs to the zinc-containing alcohol dehydrogenase family. It depends on Zn(2+) as a cofactor.

The catalysed reaction is (1R,4R,5R)-5-hydroxycamphor + NAD(+) = (1R,4R)-bornane-2,5-dione + NADH + H(+). Its pathway is terpene metabolism; (R)-camphor degradation. The chain is 5-exo-hydroxycamphor dehydrogenase (camD) from Pseudomonas putida (Arthrobacter siderocapsulatus).